A 286-amino-acid chain; its full sequence is Phosphatidylserine decarboxylase proenzyme (286 aa).

Residues Asp90, His147, and Ser252 each act as charge relay system; for autoendoproteolytic cleavage activity in the active site. The Schiff-base intermediate with substrate; via pyruvic acid; for decarboxylase activity role is filled by Ser252. Position 252 is a pyruvic acid (Ser); by autocatalysis (Ser252).

This sequence belongs to the phosphatidylserine decarboxylase family. PSD-B subfamily. Prokaryotic type I sub-subfamily. As to quaternary structure, heterodimer of a large membrane-associated beta subunit and a small pyruvoyl-containing alpha subunit. Pyruvate is required as a cofactor. Is synthesized initially as an inactive proenzyme. Formation of the active enzyme involves a self-maturation process in which the active site pyruvoyl group is generated from an internal serine residue via an autocatalytic post-translational modification. Two non-identical subunits are generated from the proenzyme in this reaction, and the pyruvate is formed at the N-terminus of the alpha chain, which is derived from the carboxyl end of the proenzyme. The autoendoproteolytic cleavage occurs by a canonical serine protease mechanism, in which the side chain hydroxyl group of the serine supplies its oxygen atom to form the C-terminus of the beta chain, while the remainder of the serine residue undergoes an oxidative deamination to produce ammonia and the pyruvoyl prosthetic group on the alpha chain. During this reaction, the Ser that is part of the protease active site of the proenzyme becomes the pyruvoyl prosthetic group, which constitutes an essential element of the active site of the mature decarboxylase.

Its subcellular location is the cell membrane. It catalyses the reaction a 1,2-diacyl-sn-glycero-3-phospho-L-serine + H(+) = a 1,2-diacyl-sn-glycero-3-phosphoethanolamine + CO2. The protein operates within phospholipid metabolism; phosphatidylethanolamine biosynthesis; phosphatidylethanolamine from CDP-diacylglycerol: step 2/2. In terms of biological role, catalyzes the formation of phosphatidylethanolamine (PtdEtn) from phosphatidylserine (PtdSer). In Ectopseudomonas mendocina (strain ymp) (Pseudomonas mendocina), this protein is Phosphatidylserine decarboxylase proenzyme.